A 380-amino-acid polypeptide reads, in one-letter code: Glucose-1-phosphate adenylyltransferase (380 aa).

Residues G164, 179–180, and S190 contribute to the alpha-D-glucose 1-phosphate site; that span reads EK.

This sequence belongs to the bacterial/plant glucose-1-phosphate adenylyltransferase family. As to quaternary structure, homotetramer.

The enzyme catalyses alpha-D-glucose 1-phosphate + ATP + H(+) = ADP-alpha-D-glucose + diphosphate. Its pathway is glycan biosynthesis; glycogen biosynthesis. In terms of biological role, involved in the biosynthesis of ADP-glucose, a building block required for the elongation reactions to produce glycogen. Catalyzes the reaction between ATP and alpha-D-glucose 1-phosphate (G1P) to produce pyrophosphate and ADP-Glc. The sequence is that of Glucose-1-phosphate adenylyltransferase from Streptococcus pneumoniae serotype 2 (strain D39 / NCTC 7466).